We begin with the raw amino-acid sequence, 128 residues long: Fluoride-specific ion channel FluC (128 aa).

The next 4 membrane-spanning stretches (helical) occupy residues 5–25 (IVAIFVGAGLGALLRWFLSIG), 35–55 (LGTLVSNLIGGYLIGIAVVAF), 67–87 (LFVITGFMGGLTTFSTYSVEV), and 96–116 (FGWALAVAALHLIGSFTLTGL). 2 residues coordinate Na(+): G75 and T78.

This sequence belongs to the fluoride channel Fluc/FEX (TC 1.A.43) family.

The protein resides in the cell inner membrane. It catalyses the reaction fluoride(in) = fluoride(out). With respect to regulation, na(+) is not transported, but it plays an essential structural role and its presence is essential for fluoride channel function. Functionally, fluoride-specific ion channel. Important for reducing fluoride concentration in the cell, thus reducing its toxicity. The protein is Fluoride-specific ion channel FluC of Burkholderia thailandensis (strain ATCC 700388 / DSM 13276 / CCUG 48851 / CIP 106301 / E264).